The primary structure comprises 295 residues: Sulfotransferase 1E1 (295 aa).

48–53 (KSGTTW) is a binding site for 3'-phosphoadenylyl sulfate. 106–108 (KSH) provides a ligand contact to substrate. The active-site Proton acceptor is the His-108. 3'-phosphoadenylyl sulfate-binding residues include Arg-130, Ser-138, and Tyr-193. Phosphoserine; by PKA is present on residues Ser-216 and Ser-228. 3'-phosphoadenylyl sulfate contacts are provided by residues 227–232 (TSFQEM) and 257–259 (RKG).

Belongs to the sulfotransferase 1 family. As to quaternary structure, homodimer.

The protein localises to the cytoplasm. Its subcellular location is the cytosol. It carries out the reaction estrone + 3'-phosphoadenylyl sulfate = estrone 3-sulfate + adenosine 3',5'-bisphosphate + H(+). The catalysed reaction is (24S)-hydroxycholesterol + 3'-phosphoadenylyl sulfate = (24S)-hydroxycholesterol 3-sulfate + adenosine 3',5'-bisphosphate + H(+). The enzyme catalyses 17beta-estradiol + 3'-phosphoadenylyl sulfate = 17beta-estradiol 3-sulfate + adenosine 3',5'-bisphosphate + H(+). It catalyses the reaction 3beta-hydroxyandrost-5-en-17-one + 3'-phosphoadenylyl sulfate = dehydroepiandrosterone 3-sulfate + adenosine 3',5'-bisphosphate + H(+). It carries out the reaction 4-ethylphenol + 3'-phosphoadenylyl sulfate = 4-ethylphenyl sulfate + adenosine 3',5'-bisphosphate + H(+). With respect to regulation, inhibited by estradiol. Sulfotransferase that utilizes 3'-phospho-5'-adenylyl sulfate (PAPS) as sulfonate donor to catalyze the sulfate conjugation of estradiol and estrone. Is a key enzyme in estrogen homeostasis, the sulfation of estrogens leads to their inactivation. Also sulfates dehydroepiandrosterone (DHEA), pregnenolone, (24S)-hydroxycholesterol and xenobiotic compounds like ethinylestradiol, equalenin, diethyl stilbesterol and 1-naphthol at significantly lower efficiency. Does not sulfonate cortisol, testosterone and dopamine. May play a role in gut microbiota-host metabolic interaction. O-sulfonates 4-ethylphenol (4-EP), a dietary tyrosine-derived metabolite produced by gut bacteria. The product 4-EPS crosses the blood-brain barrier and may negatively regulate oligodendrocyte maturation and myelination, affecting the functional connectivity of different brain regions associated with the limbic system. This Bos taurus (Bovine) protein is Sulfotransferase 1E1 (SULT1E1).